Consider the following 597-residue polypeptide: Gamma-terpinene synthase, chloroplastic (597 aa).

A chloroplast-targeting transit peptide spans 1–47 (MATLSMQVSILSKQVKNLNSFGMRASKLPMVARRVDVSTTRLRPICS). Positions 350 and 354 each coordinate Mn(2+). A DDXXD motif motif is present at residues 350 to 354 (DDVYD). Homodimerization regions lie at residues 356 to 362 (YGTLDEL) and 428 to 465 (EAKWYYAGYTPTLAEYLENAKVSISSPTIISQVYFTLP). Mn(2+) is bound by residues D494 and E502.

The protein belongs to the terpene synthase family. Homodimer. Requires Mn(2+) as cofactor. Mg(2+) is required as a cofactor.

The protein localises to the plastid. It is found in the chloroplast. It catalyses the reaction (2E)-geranyl diphosphate = gamma-terpinene + diphosphate. It participates in secondary metabolite biosynthesis; terpenoid biosynthesis. Its function is as follows. Involved in the biosynthesis of phenolic monoterpenes natural products thymol and carvacrol which have a broad range of biological activities acting as antimicrobial compounds, insecticides, antioxidants and pharmaceutical agents. Monoterpene synthase which catalyzes the conversion of geranyl diphosphate (GPP) to gamma-terpinene and minor amounts of other monoterpenes (e.g. alpha-thujene, alpha-terpinene, myrcene, sabinene, (+)-R-limonene, alpha-pinene and alpha-phellandrene). The chain is Gamma-terpinene synthase, chloroplastic from Thymus caespititius (Cretan thyme).